Consider the following 62-residue polypeptide: Large ribosomal subunit protein bL28 (62 aa).

The tract at residues 1–28 (MARVCAITGRKARSGNSRSHAMNATKRK) is disordered.

This sequence belongs to the bacterial ribosomal protein bL28 family.

This is Large ribosomal subunit protein bL28 from Bacillus thuringiensis (strain Al Hakam).